A 202-amino-acid chain; its full sequence is MEKNKSTAIEIAESSKESKGKAPLLAAAVGHDRAAGYKRGVSIFDLFLRISAATAALAATIVMGTTEQTLPFFTQFFQFRAQYDDLPTFTFFVVGMAIVTGYLILSVPFSIVCIARPVAIGPRFLLIVGDTLKAVLATSAAGSSAAIVYLAHNGNSDANWLDICQQFNDFCQRVSGAVVAAFVAVVLLIFLIVLSAMALRKN.

Over 1 to 42 (MEKNKSTAIEIAESSKESKGKAPLLAAAVGHDRAAGYKRGVS) the chain is Cytoplasmic. The chain crosses the membrane as a helical span at residues 43 to 63 (IFDLFLRISAATAALAATIVM). The Extracellular portion of the chain corresponds to 64-90 (GTTEQTLPFFTQFFQFRAQYDDLPTFT). A helical membrane pass occupies residues 91–111 (FFVVGMAIVTGYLILSVPFSI). Residues 112-130 (VCIARPVAIGPRFLLIVGD) are Cytoplasmic-facing. Residues 131-151 (TLKAVLATSAAGSSAAIVYLA) form a helical membrane-spanning segment. Residues 152-173 (HNGNSDANWLDICQQFNDFCQR) lie on the Extracellular side of the membrane. Residues 174–194 (VSGAVVAAFVAVVLLIFLIVL) form a helical membrane-spanning segment. Residues 195 to 202 (SAMALRKN) lie on the Cytoplasmic side of the membrane.

This sequence belongs to the Casparian strip membrane proteins (CASP) family. Homodimer and heterodimers.

It is found in the cell membrane. Functionally, regulates membrane-cell wall junctions and localized cell wall deposition. Required for establishment of the Casparian strip membrane domain (CSD) and the subsequent formation of Casparian strips, a cell wall modification of the root endodermis that determines an apoplastic barrier between the intraorganismal apoplasm and the extraorganismal apoplasm and prevents lateral diffusion. This is Casparian strip membrane protein 1 from Striga hermonthica (Purple witchweed).